Here is a 29-residue protein sequence, read N- to C-terminus: Photosystem I reaction center subunit XII (29 aa).

Residues 7–26 form a helical membrane-spanning segment; that stretch reads IFVALILALFSFVLAIRLGT.

Belongs to the PsaM family.

It is found in the plastid. The protein localises to the chloroplast thylakoid membrane. This is Photosystem I reaction center subunit XII from Guillardia theta (Cryptophyte).